The primary structure comprises 443 residues: Putative metabolite transport protein YaaU (443 aa).

Topologically, residues 1 to 18 are cytoplasmic; sequence MQPSRNFDDLKFSSIHRR. A helical transmembrane segment spans residues 19-39; that stretch reads ILLWGSGGPFLDGYVLVMIGV. The Periplasmic segment spans residues 40-53; the sequence is ALEQLTPALKLDAD. The chain crosses the membrane as a helical span at residues 54–74; sequence WIGLLGAGTLAGLFVGTSLFG. The Cytoplasmic portion of the chain corresponds to 75–84; that stretch reads YISDKVGRRK. A helical membrane pass occupies residues 85 to 105; that stretch reads MFLIDIIAIGVISVATMFVSS. Residues 106–113 lie on the Periplasmic side of the membrane; sequence PVELLVMR. A helical transmembrane segment spans residues 114–134; that stretch reads VLIGIVIGADYPIATSMITEF. The Cytoplasmic portion of the chain corresponds to 135–145; that stretch reads SSTRQRAFSIS. The helical transmembrane segment at 146 to 166 threads the bilayer; sequence FIAAMWYVGATCADLVGYWLY. Residues 167-173 lie on the Periplasmic side of the membrane; that stretch reads DVEGGWR. Residues 174-194 traverse the membrane as a helical segment; sequence WMLGSAAIPCLLILIGRFELP. Residues 195-241 are Cytoplasmic-facing; it reads ESPRWLLRKGRVKECEEMMIKLFGEPVAFDEEQPQQTRFRDLFNRRH. Residues 242 to 262 traverse the membrane as a helical segment; sequence FPFVLFVAAIWTCQVIPMFAI. The Periplasmic portion of the chain corresponds to 263-282; it reads YTFGPQIVGLLGLGVGKNAA. The helical transmembrane segment at 283–303 threads the bilayer; the sequence is LGNVVISLFFMLGCIPPMLWL. The Cytoplasmic portion of the chain corresponds to 304 to 309; sequence NTAGRR. Residues 310–329 form a helical membrane-spanning segment; that stretch reads PLLIGSFAMMTLALAVLGLI. Residues 330–334 lie on the Periplasmic side of the membrane; the sequence is PDMGI. The helical transmembrane segment at 335 to 357 threads the bilayer; that stretch reads WLVVMAFAVYAFFSGGPGNLQWL. At 358–373 the chain is on the cytoplasmic side; that stretch reads YPNELFPTDIRASAVG. Residues 374–394 form a helical membrane-spanning segment; that stretch reads VIMSLSRIGTIVSTWALPIFI. The Periplasmic portion of the chain corresponds to 395–401; the sequence is NNYGISN. Residues 402–422 form a helical membrane-spanning segment; sequence TMLMGAGISLFGLLISVAFAP. Residues 423–443 lie on the Cytoplasmic side of the membrane; it reads ETRGMSLAQTSNMTIRGQRMG.

Belongs to the major facilitator superfamily. Sugar transporter (TC 2.A.1.1) family.

The protein localises to the cell inner membrane. The protein is Putative metabolite transport protein YaaU (yaaU) of Escherichia coli (strain K12).